A 478-amino-acid chain; its full sequence is Calcitonin receptor (478 aa).

Residues 1–22 form the signal peptide; that stretch reads MRFTFTRQFLAFFILISNPASI. The Extracellular segment spans residues 23-146; sequence LPRSENLTFP…FTPEKLQNAY (124 aa). N-linked (GlcNAc...) asparagine glycans are attached at residues Asn28, Asn73, Asn125, and Asn130. Disulfide bonds link Cys55-Cys81, Cys72-Cys112, and Cys95-Cys134. Residues 147-169 form a helical membrane-spanning segment; the sequence is VLYYLAIVGHSMSIITLVVSLGI. Over 170–181 the chain is Cytoplasmic; sequence FVYFRSLGCQRV. A helical membrane pass occupies residues 182 to 202; the sequence is TLHKNMFLTYILNSMIIIIHL. The Extracellular portion of the chain corresponds to 203–219; sequence VEVVPNGELVRKDPVSC. Cys219 and Cys289 are joined by a disulfide. The chain crosses the membrane as a helical span at residues 220 to 242; sequence KILHFFHQYMMACNYFWMLCEGI. Residues 243–259 are Cytoplasmic-facing; that stretch reads YLHTLIVVSVFNEAKHL. Residues 260 to 280 traverse the membrane as a helical segment; the sequence is RWYYLLGWGFPLVPTTIHAIT. The Extracellular segment spans residues 281 to 296; that stretch reads RALYFNDNCWISVDTH. The helical transmembrane segment at 297 to 320 threads the bilayer; it reads LLYIIHGPVMVALVVNFFFLLNIV. Residues 321-340 lie on the Cytoplasmic side of the membrane; it reads RVLVTKMRETHEAESYMYLK. Residues 341–359 form a helical membrane-spanning segment; it reads AVKATMILVPLLGIQFVVF. Over 360-367 the chain is Extracellular; the sequence is PWRPSNKV. A helical transmembrane segment spans residues 368–394; that stretch reads LGKIYDYFMHSLIHFQGFFVATIYCFC. Over 395–478 the chain is Cytoplasmic; it reads NNEVQTTLKR…LNIIEKESSA (84 aa).

Belongs to the G-protein coupled receptor 2 family. As to quaternary structure, heterodimer of CALCR and RAMP1, RAMP2 or RAMP3; the receptor complexes function as AMYR1, AMYR2 and AMYR3 receptors, respectively, and respond to amylin/IAPP, calcitonin/CT and CGRP1 ligands. Interacts with GPRASP2.

The protein localises to the cell membrane. Its function is as follows. G protein-coupled receptor activated by ligand peptides amylin (IAPP), calcitonin (CT/CALCA) and calcitonin gene-related peptide type 1 (CGRP1/CALCA). CALCR interacts with receptor-activity-modifying proteins RAMP1, 2 and 3 to form receptor complexes AMYR1, 2 and 3, respectively. IAPP, CT and CGRP1 activate CALCR and AMYRs with distinct modes of receptor activation resulting in specific phenotypes. Ligand binding causes a conformation change that triggers signaling via guanine nucleotide-binding proteins (G proteins) and modulates the activity of downstream effectors. Activates cAMP-dependent pathway. The polypeptide is Calcitonin receptor (Cavia porcellus (Guinea pig)).